Consider the following 173-residue polypeptide: Alpha-crystallin A chain (173 aa).

Met-1 carries the N-acetylmethionine modification. The sHSP domain maps to 52–162 (LFRGFMDSGI…SHSERPIPVS (111 aa)). Residues His-100, Glu-102, His-107, and His-154 each contribute to the Zn(2+) site. The interval 146–173 (MMSGLDSSHSERPIPVSREEKPTSAPSS) is disordered. A compositionally biased stretch (basic and acidic residues) spans 153 to 167 (SHSERPIPVSREEKP).

It belongs to the small heat shock protein (HSP20) family. Heteropolymer composed of three CRYAA and one CRYAB subunits. Inter-subunit bridging via zinc ions enhances stability, which is crucial as there is no protein turn over in the lens. Can also form homodimers and homotetramers (dimers of dimers) which serve as the building blocks of homooligomers. Within homooligomers, the zinc-binding motif is created from residues of 3 different molecules. His-100 and Glu-102 from one molecule are ligands of the zinc ion, and His-107 and His-154 residues from additional molecules complete the site with tetrahedral coordination geometry.

It is found in the cytoplasm. The protein localises to the nucleus. In terms of biological role, contributes to the transparency and refractive index of the lens. May act as a chaperone, preventing aggregation of various proteins under a wide range of stress conditions. This chain is Alpha-crystallin A chain (CRYAA), found in Aquarana catesbeiana (American bullfrog).